We begin with the raw amino-acid sequence, 164 residues long: Cyclin-dependent kinase inhibitor 1 (164 aa).

The residue at position 2 (Ser2) is an N-acetylserine. A Glycyl serine ester (Ser-Gly) (interchain with G-Cter in ubiquitin) cross-link involves residue Ser2. A C4-type zinc finger spans residues 13-41; that stretch reads CGSKACRRLFGPVDSEQLSRDCDALMAGC. The interval 17–24 is required for binding cyclins; that stretch reads ACRRLFGP. Residues 53–58 are required for binding CDKs; it reads FVTETP. The disordered stretch occupies residues 76-164; that stretch reads LYLPTGPRRG…RRLIFSKRKP (89 aa). Phosphothreonine; by LKB1 is present on Thr80. Residue Ser114 is modified to Phosphoserine; by GSK3-beta. Ser130 is subject to Phosphoserine. Residues 140–164 carry the PIP-box K+4 motif motif; it reads RKRRQTSMTDFYHSKRRLIFSKRKP. Positions 141–156 match the Nuclear localization signal motif; it reads KRRQTSMTDFYHSKRR. Residue Thr145 is modified to Phosphothreonine; by PKA, PKB/AKT1, PIM1 and PIM2. Ser146 carries the phosphoserine; by PKC and NUAK1 modification. The interval 152-164 is interaction with TRIM39; it reads HSKRRLIFSKRKP. Residues 153-164 show a composition bias toward basic residues; that stretch reads SKRRLIFSKRKP. Ser160 is subject to Phosphoserine; by PKC; in vitro.

The protein belongs to the CDI family. As to quaternary structure, interacts with HDAC1; the interaction is prevented by competitive binding of C10orf90/FATS to HDAC1 facilitating acetylation and protein stabilization of CDKN1A/p21. Interacts with MKRN1. Interacts with PSMA3. Interacts with PCNA. Component of the ternary complex, cyclin D-CDK4-CDKN1A. Interacts (via its N-terminal domain) with CDK4; the interaction promotes the assembly of the cyclin D-CDK4 complex, its nuclear translocation and promotes the cyclin D-dependent enzyme activity of CDK4. Binding to CDK2 leads to CDK2/cyclin E inactivation at the G1-S phase DNA damage checkpoint, thereby arresting cells at the G1-S transition during DNA repair. Interacts with PIM1. Interacts with STK11 and NUAK1. Interacts wih DTL. Interacts with isoform 1 and isoform 2 of TRIM39. Interacts with PKP3; the interaction sequesters CDKN1A to the cytoplasm thereby repressing its role as an inhibitor of CDK4- and CDK6-driven RB1 phosphorylation. Post-translationally, phosphorylation of Thr-145 by Akt or of Ser-146 by PKC impairs binding to PCNA. Phosphorylation at Ser-114 by GSK3-beta enhances ubiquitination by the DCX(DTL) complex. Phosphorylation of Thr-145 by PIM2 enhances CDKN1A stability and inhibits cell proliferation. Phosphorylation of Thr-145 by PIM1 results in the relocation of CDKN1A to the cytoplasm and enhanced CDKN1A protein stability. UV radiation-induced phosphorylation at Thr-80 by LKB1 and at Ser-146 by NUAK1 leads to its degradation. Ubiquitinated by MKRN1; leading to polyubiquitination and 26S proteasome-dependent degradation. Ubiquitinated by the DCX(DTL) complex, also named CRL4(CDT2) complex, leading to its degradation during S phase or following UV irradiation. Ubiquitination by the DCX(DTL) complex is essential to control replication licensing and is PCNA-dependent: interacts with PCNA via its PIP-box, while the presence of the containing the 'K+4' motif in the PIP box, recruit the DCX(DTL) complex, leading to its degradation. Ubiquitination at Ser-2 leads to degradation by the proteasome pathway. Ubiquitinated by RNF114; leading to proteasomal degradation. In terms of processing, acetylation leads to protein stability. Acetylated in vitro on Lys-141, Lys-154, Lys-161 and Lys-163. Deacetylation by HDAC1 is prevented by competitive binding of C10orf90/FATS to HDAC1. In terms of tissue distribution, expressed in all adult tissues, with 5-fold lower levels observed in the brain.

The protein localises to the cytoplasm. The protein resides in the nucleus. Plays an important role in controlling cell cycle progression and DNA damage-induced G2 arrest. Involved in p53/TP53 mediated inhibition of cellular proliferation in response to DNA damage. Also involved in p53-independent DNA damage-induced G2 arrest mediated by CREB3L1 in astrocytes and osteoblasts. Binds to and inhibits cyclin-dependent kinase activity, preventing phosphorylation of critical cyclin-dependent kinase substrates and blocking cell cycle progression. Functions in the nuclear localization and assembly of cyclin D-CDK4 complex and promotes its kinase activity towards RB1. At higher stoichiometric ratios, inhibits the kinase activity of the cyclin D-CDK4 complex. Inhibits DNA synthesis by DNA polymerase delta by competing with POLD3 for PCNA binding. Negatively regulates the CDK4- and CDK6-driven phosphorylation of RB1 in keratinocytes, thereby resulting in the release of E2F1 and subsequent transcription of E2F1-driven G1/S phase promoting genes. This chain is Cyclin-dependent kinase inhibitor 1, found in Homo sapiens (Human).